We begin with the raw amino-acid sequence, 144 residues long: Large ribosomal subunit protein uL16 (144 aa).

The span at M1 to G19 shows a compositional bias: basic residues. Positions M1–G23 are disordered.

The protein belongs to the universal ribosomal protein uL16 family. As to quaternary structure, part of the 50S ribosomal subunit.

Functionally, binds 23S rRNA and is also seen to make contacts with the A and possibly P site tRNAs. The sequence is that of Large ribosomal subunit protein uL16 from Staphylococcus saprophyticus subsp. saprophyticus (strain ATCC 15305 / DSM 20229 / NCIMB 8711 / NCTC 7292 / S-41).